Reading from the N-terminus, the 252-residue chain is Imidazole glycerol phosphate synthase subunit HisF (252 aa).

Residues Asp11 and Asp130 contribute to the active site.

The protein belongs to the HisA/HisF family. In terms of assembly, heterodimer of HisH and HisF.

It localises to the cytoplasm. The enzyme catalyses 5-[(5-phospho-1-deoxy-D-ribulos-1-ylimino)methylamino]-1-(5-phospho-beta-D-ribosyl)imidazole-4-carboxamide + L-glutamine = D-erythro-1-(imidazol-4-yl)glycerol 3-phosphate + 5-amino-1-(5-phospho-beta-D-ribosyl)imidazole-4-carboxamide + L-glutamate + H(+). It participates in amino-acid biosynthesis; L-histidine biosynthesis; L-histidine from 5-phospho-alpha-D-ribose 1-diphosphate: step 5/9. IGPS catalyzes the conversion of PRFAR and glutamine to IGP, AICAR and glutamate. The HisF subunit catalyzes the cyclization activity that produces IGP and AICAR from PRFAR using the ammonia provided by the HisH subunit. The sequence is that of Imidazole glycerol phosphate synthase subunit HisF from Bacillus cereus (strain AH820).